Here is a 150-residue protein sequence, read N- to C-terminus: Transcriptional repressor NrdR (150 aa).

The interval 1 to 22 (MKCPYCSAPDSRVVNSRPSDDG) is disordered. Residues 3-34 (CPYCSAPDSRVVNSRPSDDGASIRRRRECLRC) fold into a zinc finger. The ATP-cone domain maps to 49–136 (LMVLKRGGQR…VYRDFDSLER (88 aa)).

It belongs to the NrdR family. It depends on Zn(2+) as a cofactor.

Functionally, negatively regulates transcription of bacterial ribonucleotide reductase nrd genes and operons by binding to NrdR-boxes. The protein is Transcriptional repressor NrdR of Deinococcus geothermalis (strain DSM 11300 / CIP 105573 / AG-3a).